Consider the following 548-residue polypeptide: Thermosome subunit beta (548 aa).

The protein belongs to the TCP-1 chaperonin family. As to quaternary structure, forms a Heterooligomeric complex of two stacked eight-membered rings.

Its function is as follows. Molecular chaperone; binds unfolded polypeptides in vitro, and has a weak ATPase activity. The sequence is that of Thermosome subunit beta (thsB) from Aeropyrum pernix (strain ATCC 700893 / DSM 11879 / JCM 9820 / NBRC 100138 / K1).